We begin with the raw amino-acid sequence, 145 residues long: D-aminoacyl-tRNA deacylase (145 aa).

The Gly-cisPro motif, important for rejection of L-amino acids motif lies at 137 to 138 (GP).

It belongs to the DTD family. In terms of assembly, homodimer.

The protein localises to the cytoplasm. The catalysed reaction is glycyl-tRNA(Ala) + H2O = tRNA(Ala) + glycine + H(+). It catalyses the reaction a D-aminoacyl-tRNA + H2O = a tRNA + a D-alpha-amino acid + H(+). An aminoacyl-tRNA editing enzyme that deacylates mischarged D-aminoacyl-tRNAs. Also deacylates mischarged glycyl-tRNA(Ala), protecting cells against glycine mischarging by AlaRS. Acts via tRNA-based rather than protein-based catalysis; rejects L-amino acids rather than detecting D-amino acids in the active site. By recycling D-aminoacyl-tRNA to D-amino acids and free tRNA molecules, this enzyme counteracts the toxicity associated with the formation of D-aminoacyl-tRNA entities in vivo and helps enforce protein L-homochirality. This Shewanella oneidensis (strain ATCC 700550 / JCM 31522 / CIP 106686 / LMG 19005 / NCIMB 14063 / MR-1) protein is D-aminoacyl-tRNA deacylase.